Here is a 407-residue protein sequence, read N- to C-terminus: Tyrosine--tRNA ligase (407 aa).

Tyr-35 contributes to the L-tyrosine binding site. The 'HIGH' region motif lies at 40 to 49 (PTADSLHVGH). 2 residues coordinate L-tyrosine: Tyr-168 and Gln-172. A 'KMSKS' region motif is present at residues 228–232 (KMGKT). Lys-231 is a binding site for ATP. The 65-residue stretch at 341–405 (NLLVDLLVKC…RGKKNFNRIV (65 aa)) folds into the S4 RNA-binding domain.

Belongs to the class-I aminoacyl-tRNA synthetase family. TyrS type 1 subfamily. As to quaternary structure, homodimer.

The protein resides in the cytoplasm. The catalysed reaction is tRNA(Tyr) + L-tyrosine + ATP = L-tyrosyl-tRNA(Tyr) + AMP + diphosphate + H(+). In terms of biological role, catalyzes the attachment of tyrosine to tRNA(Tyr) in a two-step reaction: tyrosine is first activated by ATP to form Tyr-AMP and then transferred to the acceptor end of tRNA(Tyr). The sequence is that of Tyrosine--tRNA ligase from Clostridium botulinum (strain Kyoto / Type A2).